A 333-amino-acid chain; its full sequence is UDP-N-acetylenolpyruvoylglucosamine reductase (333 aa).

An FAD-binding PCMH-type domain is found at L12 to D176. The active site involves R153. S221 serves as the catalytic Proton donor. Residue E317 is part of the active site.

Belongs to the MurB family. Requires FAD as cofactor.

Its subcellular location is the cytoplasm. The catalysed reaction is UDP-N-acetyl-alpha-D-muramate + NADP(+) = UDP-N-acetyl-3-O-(1-carboxyvinyl)-alpha-D-glucosamine + NADPH + H(+). Its pathway is cell wall biogenesis; peptidoglycan biosynthesis. Functionally, cell wall formation. This Idiomarina loihiensis (strain ATCC BAA-735 / DSM 15497 / L2-TR) protein is UDP-N-acetylenolpyruvoylglucosamine reductase.